The sequence spans 122 residues: MIQMQTMLEVADNTGARHVQCIKVLGGSKRRYASVGDIIKVSIKDAAPRGRVKKGDVYNAVVVRTAKGVRRPDGSLIKFDSNAAVLLNNKLEPIGTRIFGPVTRELRTERFMKIVSLAPEVL.

The protein belongs to the universal ribosomal protein uL14 family. As to quaternary structure, part of the 50S ribosomal subunit. Forms a cluster with proteins L3 and L19. In the 70S ribosome, L14 and L19 interact and together make contacts with the 16S rRNA in bridges B5 and B8.

Its function is as follows. Binds to 23S rRNA. Forms part of two intersubunit bridges in the 70S ribosome. The sequence is that of Large ribosomal subunit protein uL14 from Chromobacterium violaceum (strain ATCC 12472 / DSM 30191 / JCM 1249 / CCUG 213 / NBRC 12614 / NCIMB 9131 / NCTC 9757 / MK).